A 234-amino-acid polypeptide reads, in one-letter code: Putative gustatory receptor clone PTE38 (234 aa).

The helical transmembrane segment at 1–11 threads the bilayer; sequence MYLFFSNLSFN. Residues 12–42 are Extracellular-facing; it reads DICIITTTIPKMLMNVQSHDQSITYLGCLSQ. Cysteine 39 and cysteine 121 are disulfide-bonded. A helical membrane pass occupies residues 43–62; that stretch reads VYLIVNFGSIESCLLAVMAY. Topologically, residues 63–84 are cytoplasmic; it reads DRYVAICHPLKYTVIMNHYFCV. Residues 85–105 form a helical membrane-spanning segment; the sequence is MLLLFACSLALHMCLFHILMV. Residues 106–138 lie on the Extracellular side of the membrane; that stretch reads LILTFCTKTEIPHFFCELAHIIKLTCSDNFINY. Residues 139 to 160 form a helical membrane-spanning segment; that stretch reads LLIYTVSVLFFGVHIVGIILSY. Residues 161–182 lie on the Cytoplasmic side of the membrane; sequence IYTVSSVLRMSLLGGMYKAFST. A helical transmembrane segment spans residues 183–202; that stretch reads CGSHLSVVSLFYGTGFGVHI. Over 203–212 the chain is Extracellular; the sequence is SSPLTDSPRK. Residues 213-234 traverse the membrane as a helical segment; it reads TVVASVMYTVVTQMHGPFIYSL.

Belongs to the G-protein coupled receptor 1 family. As to expression, tongue specific.

It is found in the cell membrane. Possible taste receptor. The chain is Putative gustatory receptor clone PTE38 from Rattus norvegicus (Rat).